A 121-amino-acid polypeptide reads, in one-letter code: Large ribosomal subunit protein bL19 (121 aa).

The protein belongs to the bacterial ribosomal protein bL19 family.

In terms of biological role, this protein is located at the 30S-50S ribosomal subunit interface and may play a role in the structure and function of the aminoacyl-tRNA binding site. The protein is Large ribosomal subunit protein bL19 of Chlorobium phaeobacteroides (strain BS1).